A 549-amino-acid chain; its full sequence is Glucose-6-phosphate isomerase (549 aa).

Residue glutamate 355 is the Proton donor of the active site. Catalysis depends on residues histidine 386 and lysine 514.

This sequence belongs to the GPI family.

Its subcellular location is the cytoplasm. The enzyme catalyses alpha-D-glucose 6-phosphate = beta-D-fructose 6-phosphate. Its pathway is carbohydrate biosynthesis; gluconeogenesis. It participates in carbohydrate degradation; glycolysis; D-glyceraldehyde 3-phosphate and glycerone phosphate from D-glucose: step 2/4. Its function is as follows. Catalyzes the reversible isomerization of glucose-6-phosphate to fructose-6-phosphate. The sequence is that of Glucose-6-phosphate isomerase from Salmonella gallinarum (strain 287/91 / NCTC 13346).